Consider the following 150-residue polypeptide: Ribonuclease K6 (150 aa).

Residues 1-23 (MVLCFPLLLLVLVLWGQVCPLHA) form the signal peptide. The active-site Proton acceptor is H38. 4 disulfide bridges follow: C46–C104, C60–C114, C78–C129, and C85–C92. Residue N55 is glycosylated (N-linked (GlcNAc...) asparagine). Substrate-binding positions include 61–65 (KPQNT) and K86. The N-linked (GlcNAc...) asparagine glycan is linked to N100. Substrate is bound at residue R105. H145 functions as the Proton donor in the catalytic mechanism.

Belongs to the pancreatic ribonuclease family. As to quaternary structure, interacts (via N-terminus) with bacterial lipopolysaccharide (LPS).

It is found in the secreted. The protein localises to the lysosome. Its subcellular location is the cytoplasmic granule. In terms of biological role, ribonuclease which shows a preference for the pyrimidines uridine and cytosine. Has potent antibacterial activity against a range of Gram-positive and Gram-negative bacteria, including P.aeruginosa, A.baumanii, M.luteus, S.aureus, E.faecalis, E.faecium, S.saprophyticus and E.coli. Causes loss of bacterial membrane integrity, and also promotes agglutination of Gram-negative bacteria. Probably contributes to urinary tract sterility. Bactericidal activity is independent of RNase activity. The polypeptide is Ribonuclease K6 (RNASE6) (Aotus trivirgatus (Three-striped night monkey)).